The sequence spans 92 residues: Small ribosomal subunit protein uS19 (92 aa).

Belongs to the universal ribosomal protein uS19 family.

In terms of biological role, protein S19 forms a complex with S13 that binds strongly to the 16S ribosomal RNA. The sequence is that of Small ribosomal subunit protein uS19 (rpsS) from Synechocystis sp. (strain ATCC 27184 / PCC 6803 / Kazusa).